Here is a 497-residue protein sequence, read N- to C-terminus: Arabinose import ATP-binding protein AraG (497 aa).

2 ABC transporter domains span residues 6 to 242 (LRFD…MVGR) and 250 to 497 (FRPR…ALPA). ATP is bound at residue 38 to 45 (GENGAGKS).

The protein belongs to the ABC transporter superfamily. Arabinose importer (TC 3.A.1.2.2) family. In terms of assembly, the complex is composed of two ATP-binding proteins (AraG), two transmembrane proteins (AraH) and a solute-binding protein (AraF).

The protein resides in the cell inner membrane. The catalysed reaction is L-arabinose(out) + ATP + H2O = L-arabinose(in) + ADP + phosphate + H(+). Its function is as follows. Part of the ABC transporter complex AraFGH involved in arabinose import. Responsible for energy coupling to the transport system. The chain is Arabinose import ATP-binding protein AraG from Chromohalobacter salexigens (strain ATCC BAA-138 / DSM 3043 / CIP 106854 / NCIMB 13768 / 1H11).